A 147-amino-acid polypeptide reads, in one-letter code: Globin, major polymeric component P1 (147 aa).

One can recognise a Globin domain in the interval 2–146; sequence HLTADQVAAL…ISDACIAGLQ (145 aa). A heme b-binding site is contributed by His96.

The protein belongs to the globin family. As to quaternary structure, polymer.

The sequence is that of Globin, major polymeric component P1 from Glycera dibranchiata (Bloodworm).